A 212-amino-acid polypeptide reads, in one-letter code: Transcription factor MYB8 (212 aa).

HTH myb-type domains are found at residues 9–61 (KAHM…INYL) and 62–116 (RPDL…KRKL). DNA-binding regions (H-T-H motif) lie at residues 37 to 61 (WRSL…INYL) and 89 to 112 (WSLI…NTHI).

It is found in the nucleus. Its function is as follows. Transcription activator. The chain is Transcription factor MYB8 from Arabidopsis thaliana (Mouse-ear cress).